A 304-amino-acid chain; its full sequence is Acetyl-coenzyme A carboxylase carboxyl transferase subunit beta (304 aa).

One can recognise a CoA carboxyltransferase N-terminal domain in the interval valine 23–glutamate 292. Zn(2+) contacts are provided by cysteine 27, cysteine 30, cysteine 46, and cysteine 49. The C4-type zinc finger occupies cysteine 27 to cysteine 49. Positions proline 281–alanine 304 are disordered. The segment covering proline 295 to alanine 304 has biased composition (pro residues).

The protein belongs to the AccD/PCCB family. In terms of assembly, acetyl-CoA carboxylase is a heterohexamer composed of biotin carboxyl carrier protein (AccB), biotin carboxylase (AccC) and two subunits each of ACCase subunit alpha (AccA) and ACCase subunit beta (AccD). Requires Zn(2+) as cofactor.

The protein resides in the cytoplasm. It carries out the reaction N(6)-carboxybiotinyl-L-lysyl-[protein] + acetyl-CoA = N(6)-biotinyl-L-lysyl-[protein] + malonyl-CoA. The protein operates within lipid metabolism; malonyl-CoA biosynthesis; malonyl-CoA from acetyl-CoA: step 1/1. Its function is as follows. Component of the acetyl coenzyme A carboxylase (ACC) complex. Biotin carboxylase (BC) catalyzes the carboxylation of biotin on its carrier protein (BCCP) and then the CO(2) group is transferred by the transcarboxylase to acetyl-CoA to form malonyl-CoA. The sequence is that of Acetyl-coenzyme A carboxylase carboxyl transferase subunit beta from Citrobacter koseri (strain ATCC BAA-895 / CDC 4225-83 / SGSC4696).